The primary structure comprises 459 residues: Bifunctional protein GlmU (459 aa).

Positions 1–229 (MSNFAIILAA…FDESLGVNDR (229 aa)) are pyrophosphorylase. UDP-N-acetyl-alpha-D-glucosamine is bound by residues 8 to 11 (LAAG), lysine 22, glutamine 72, and 77 to 78 (GT). Aspartate 102 contacts Mg(2+). Residues glycine 139, glutamate 154, asparagine 169, and asparagine 227 each contribute to the UDP-N-acetyl-alpha-D-glucosamine site. A Mg(2+)-binding site is contributed by asparagine 227. Positions 230–250 (VALATAESVMRRRINHKHMVN) are linker. An N-acetyltransferase region spans residues 251 to 459 (GVSFVNPEAT…TRLPHHPKNQ (209 aa)). Residues arginine 332 and lysine 350 each coordinate UDP-N-acetyl-alpha-D-glucosamine. Histidine 362 serves as the catalytic Proton acceptor. 2 residues coordinate UDP-N-acetyl-alpha-D-glucosamine: tyrosine 365 and asparagine 376. Residues alanine 379, 385 to 386 (NY), serine 404, alanine 422, and arginine 439 contribute to the acetyl-CoA site.

It in the N-terminal section; belongs to the N-acetylglucosamine-1-phosphate uridyltransferase family. The protein in the C-terminal section; belongs to the transferase hexapeptide repeat family. In terms of assembly, homotrimer. It depends on Mg(2+) as a cofactor.

It is found in the cytoplasm. It carries out the reaction alpha-D-glucosamine 1-phosphate + acetyl-CoA = N-acetyl-alpha-D-glucosamine 1-phosphate + CoA + H(+). The catalysed reaction is N-acetyl-alpha-D-glucosamine 1-phosphate + UTP + H(+) = UDP-N-acetyl-alpha-D-glucosamine + diphosphate. Its pathway is nucleotide-sugar biosynthesis; UDP-N-acetyl-alpha-D-glucosamine biosynthesis; N-acetyl-alpha-D-glucosamine 1-phosphate from alpha-D-glucosamine 6-phosphate (route II): step 2/2. It participates in nucleotide-sugar biosynthesis; UDP-N-acetyl-alpha-D-glucosamine biosynthesis; UDP-N-acetyl-alpha-D-glucosamine from N-acetyl-alpha-D-glucosamine 1-phosphate: step 1/1. It functions in the pathway bacterial outer membrane biogenesis; LPS lipid A biosynthesis. Functionally, catalyzes the last two sequential reactions in the de novo biosynthetic pathway for UDP-N-acetylglucosamine (UDP-GlcNAc). The C-terminal domain catalyzes the transfer of acetyl group from acetyl coenzyme A to glucosamine-1-phosphate (GlcN-1-P) to produce N-acetylglucosamine-1-phosphate (GlcNAc-1-P), which is converted into UDP-GlcNAc by the transfer of uridine 5-monophosphate (from uridine 5-triphosphate), a reaction catalyzed by the N-terminal domain. In Streptococcus pneumoniae (strain 70585), this protein is Bifunctional protein GlmU.